The primary structure comprises 330 residues: MEKSFILQQQGISFAKHTFTQKLMEHLGLIEVQGPLLSQVGDGIQDGLSGREKAVSVSVKQIPGTAFEVVHSLAKWKRHTLARYGFQDNEGLFVHMIALRPDEDFLDQVRSVCVDQWDWEKVVPVGSRNLAYLKDTVRKVYGALRESEVLVSERFGLRAFLPADIVFVQSEELVRRYPHLDSKGREDAICKEHGAVFLIGIGGVLSDGKPHDVRAPDYDDWTTPSEGEYKGLNGDILVWNPVLGRAFEVSSMGIRVDEGALRTQLALTGDEDSLACSWHQDLINGRLPQSIGGGIGQSRLAMLLLQRKHIGEVQASVWPRSVREEFENIL.

This sequence belongs to the class-II aminoacyl-tRNA synthetase family. AsnA subfamily.

It is found in the cytoplasm. The enzyme catalyses L-aspartate + NH4(+) + ATP = L-asparagine + AMP + diphosphate + H(+). Its pathway is amino-acid biosynthesis; L-asparagine biosynthesis; L-asparagine from L-aspartate (ammonia route): step 1/1. The chain is Aspartate--ammonia ligase from Treponema pallidum (strain Nichols).